The following is a 510-amino-acid chain: Histidine ammonia-lyase (510 aa).

Residues 143-145 constitute a cross-link (5-imidazolinone (Ala-Gly)); the sequence is ASG. Residue Ser-144 is modified to 2,3-didehydroalanine (Ser).

This sequence belongs to the PAL/histidase family. Post-translationally, contains an active site 4-methylidene-imidazol-5-one (MIO), which is formed autocatalytically by cyclization and dehydration of residues Ala-Ser-Gly.

It is found in the cytoplasm. The enzyme catalyses L-histidine = trans-urocanate + NH4(+). The protein operates within amino-acid degradation; L-histidine degradation into L-glutamate; N-formimidoyl-L-glutamate from L-histidine: step 1/3. The protein is Histidine ammonia-lyase of Shewanella pealeana (strain ATCC 700345 / ANG-SQ1).